Here is a 324-residue protein sequence, read N- to C-terminus: Delta-aminolevulinic acid dehydratase (324 aa).

3 residues coordinate Zn(2+): C120, C122, and C130. K195 acts as the Schiff-base intermediate with substrate in catalysis. Residues R205 and R216 each coordinate 5-aminolevulinate. E232 contributes to the Mg(2+) binding site. K247 serves as the catalytic Schiff-base intermediate with substrate. Residues S273 and Y312 each contribute to the 5-aminolevulinate site.

This sequence belongs to the ALAD family. Homooctamer. It depends on Zn(2+) as a cofactor.

The catalysed reaction is 2 5-aminolevulinate = porphobilinogen + 2 H2O + H(+). It participates in porphyrin-containing compound metabolism; protoporphyrin-IX biosynthesis; coproporphyrinogen-III from 5-aminolevulinate: step 1/4. With respect to regulation, allosteric enzyme. Stimulated by magnesium ions. Its function is as follows. Catalyzes an early step in the biosynthesis of tetrapyrroles. Binds two molecules of 5-aminolevulinate per subunit, each at a distinct site, and catalyzes their condensation to form porphobilinogen. This Escherichia coli (strain K12) protein is Delta-aminolevulinic acid dehydratase (hemB).